We begin with the raw amino-acid sequence, 410 residues long: Interstrand DNA cross-link repair glycosylase (410 aa).

A QXD; important for activity motif is present at residues 45-47 (QID).

The protein belongs to the DNA glycosylase AlkZ-like family.

Its function is as follows. DNA glycosylase involved in the repair of interstrand DNA cross-links (ICLs), which are highly toxic DNA lesions that covalently tether the opposing strands of DNA, thereby inhibiting essential cellular processes such as DNA replication and transcription. Acts by unhooking both sides of the ICLs, forming abasic (AP) sites on both strands. Unhooks ICLs derived from various cross-linking agents, including azinomycin B (AZB) and mechlorethamine, also known as nitrogen mustard (NM), protecting cells from the toxicity of these cross-linking agents. In vitro, also acts on monoadducts and can catalyze the excision of N7-methylguanine (7mGua) from an oligonucleotide containing N7-methyldeoxyguanosine (d7mG). Shows no unhooking activity toward FaPy-ICLs. The polypeptide is Interstrand DNA cross-link repair glycosylase (ycaQ) (Escherichia coli (strain K12)).